A 322-amino-acid polypeptide reads, in one-letter code: Sideroflexin-1 (322 aa).

N-acetylserine is present on S2. The Mitochondrial matrix portion of the chain corresponds to 2 to 102 (SGELPPNINI…MSAQVPMNMT (101 aa)). The helical transmembrane segment at 103-120 (ITGCMMTFYRTTPAVLFW) threads the bilayer. The Mitochondrial intermembrane portion of the chain corresponds to 121 to 146 (QWINQSFNAVVNYTNRSGDAPLTVNE). A helical membrane pass occupies residues 147–167 (LGTAYVSATTGAVATALGLNA). At 168 to 174 (LTKHVSP) the chain is on the mitochondrial matrix side. A helical membrane pass occupies residues 175-195 (LIGRFVPFAAVAAANCINIPL). The Mitochondrial intermembrane portion of the chain corresponds to 196–228 (MRQRELKVGIPVTDENGNRLGESANAAKQAITQ). The helical transmembrane segment at 229 to 249 (VVVSRILMAAPGMAIPPFIMN) threads the bilayer. The Mitochondrial matrix segment spans residues 250–266 (TLEKKAFLKRFPWMSAP). A helical transmembrane segment spans residues 267–287 (IQVGLVGFCLVFATPLCCALF). At 288-322 (PQKSSMSVTSLEAELQAKIQESHPELRRVYFNKGL) the chain is on the mitochondrial intermembrane side.

It belongs to the sideroflexin family. As to expression, highly expressed in tissues with high one-carbon metabolism activity, such as blood, liver and kidney.

The protein localises to the mitochondrion inner membrane. It carries out the reaction L-serine(in) = L-serine(out). It catalyses the reaction L-alanine(in) = L-alanine(out). The enzyme catalyses L-cysteine(in) = L-cysteine(out). In terms of biological role, amino acid transporter importing serine, an essential substrate of the mitochondrial branch of the one-carbon pathway, into mitochondria. Mitochondrial serine is then converted to glycine and formate, which exits to the cytosol where it is used to generate the charged folates that serve as one-carbon donors. May also transport other amino acids including alanine and cysteine. In Homo sapiens (Human), this protein is Sideroflexin-1.